Reading from the N-terminus, the 223-residue chain is uncharacterized protein (223 aa).

Residues 1 to 12 (MFRSLVRKTTPL) constitute a mitochondrion transit peptide.

It localises to the mitochondrion. This is an uncharacterized protein from Candida albicans (strain WO-1) (Yeast).